Consider the following 419-residue polypeptide: Inward rectifier potassium channel 16 (419 aa).

Over Met-1–Asp-67 the chain is Cytoplasmic. The helical transmembrane segment at Thr-68–Leu-94 threads the bilayer. The Extracellular segment spans residues Ile-95–Ser-117. The helical; Pore-forming intramembrane region spans Phe-118–Tyr-134. Residues Thr-131–Tyr-136 carry the Selectivity filter motif. Topologically, residues Gly-135 to Cys-143 are extracellular. A helical membrane pass occupies residues Ser-144–Lys-171. Residues Met-172–Met-419 lie on the Cytoplasmic side of the membrane. Ser-358, Ser-374, and Ser-376 each carry phosphoserine.

This sequence belongs to the inward rectifier-type potassium channel (TC 1.A.2.1) family. KCNJ16 subfamily. In terms of assembly, it forms heteromeric channels with Kir4.1/KCNJ10; this interaction is required for KCNJ16 localization to the basolateral membrane in kidney cells. As a heteromer with KCNJ10, may interact with MAGI1; this interaction may facilitate KCNJ10/KCNJ16 potassium channel expression at the basolateral membrane in kidney cells. May form heteromers with Kir2.1/KCNJ2. Can form heteromeric channels with Kir4.2/KCNJ15. In terms of tissue distribution, expressed in the brain, testis, liver, spleen, kidney, submaxillary gland and adrenals. In the kidney, expressed in the epithelial cells of both proximal and distal convoluted tubules, in the endothelial cells surrounding glomerular capillaries and in the flattened parietal layer of Bowman's capsule.

The protein localises to the membrane. The protein resides in the basolateral cell membrane. The catalysed reaction is K(+)(in) = K(+)(out). Channel activity is strongly regulated by variations of cytosolic pH; channels are activated by alkaline and inhibited by acidic pH values. Activated by phosphatidylinositol 4,5 biphosphate (PtdIns(4,5)P2). Functionally, inward rectifier potassium channels are characterized by a greater tendency to allow potassium to flow into the cell rather than out of it. Their voltage dependence is regulated by the concentration of extracellular potassium; as external potassium is raised, the voltage range of the channel opening shifts to more positive voltages. The inward rectification is mainly due to the blockage of outward current by internal magnesium. KCNJ16 may be involved in the regulation of fluid and pH balance. In the kidney, together with KCNJ10, mediates basolateral K(+) recycling in distal tubules; this process is critical for Na(+) reabsorption at the tubules. The protein is Inward rectifier potassium channel 16 (Kcnj16) of Rattus norvegicus (Rat).